The chain runs to 363 residues: Trans-2,3-enoyl-CoA reductase-like (363 aa).

The residue at position 37 (serine 37) is a Phosphoserine. 4 consecutive transmembrane segments (helical) span residues 143-163, 216-235, 250-270, and 311-331; these read WTTV…LFYL, NLLK…AYYI, VAIS…INVV, and ISFT…LMSI.

This sequence belongs to the steroid 5-alpha reductase family.

It is found in the membrane. The protein localises to the endoplasmic reticulum. The polypeptide is Trans-2,3-enoyl-CoA reductase-like (TECRL) (Bos taurus (Bovine)).